Consider the following 584-residue polypeptide: Phosphoinositide phospholipase C 7 (584 aa).

Residues 26-102 (EIKTLFDNYS…NSPLSSLEVH (77 aa)) form the EF-hand-like domain. Positions 103–248 (QDMDAPLSHY…LKKRIMISTK (146 aa)) constitute a PI-PLC X-box domain. Catalysis depends on residues H118 and H164. The segment at 285–318 (DRSVDKNDSNGDDDDDDDDDDDDDDGDDKIKKNA) is disordered. Phosphoserine is present on S287. Residues 294–311 (NGDDDDDDDDDDDDDDGD) are compositionally biased toward acidic residues. A PI-PLC Y-box domain is found at 323–439 (KHLIAIEAGK…GYIKKPDLLL (117 aa)). Positions 433–566 (KKPDLLLKSN…QGIRAVPLRN (134 aa)) constitute a C2 domain.

The cofactor is Ca(2+). Expressed in leaves, roots, flowers and siliques.

It localises to the cell membrane. The catalysed reaction is a 1,2-diacyl-sn-glycero-3-phospho-(1D-myo-inositol-4,5-bisphosphate) + H2O = 1D-myo-inositol 1,4,5-trisphosphate + a 1,2-diacyl-sn-glycerol + H(+). Its function is as follows. The production of the second messenger molecules diacylglycerol (DAG) and inositol 1,4,5-trisphosphate (IP3) is mediated by activated phosphatidylinositol-specific phospholipase C enzymes. The sequence is that of Phosphoinositide phospholipase C 7 (PLC7) from Arabidopsis thaliana (Mouse-ear cress).